The primary structure comprises 220 residues: Ribosomal RNA small subunit methyltransferase G (220 aa).

S-adenosyl-L-methionine contacts are provided by residues Gly78, Phe83, 129–130 (GE), and Arg146.

Belongs to the methyltransferase superfamily. RNA methyltransferase RsmG family.

The protein localises to the cytoplasm. It carries out the reaction guanosine(527) in 16S rRNA + S-adenosyl-L-methionine = N(7)-methylguanosine(527) in 16S rRNA + S-adenosyl-L-homocysteine. Its function is as follows. Specifically methylates the N7 position of guanine in position 527 of 16S rRNA. This Geobacter metallireducens (strain ATCC 53774 / DSM 7210 / GS-15) protein is Ribosomal RNA small subunit methyltransferase G.